An 85-amino-acid polypeptide reads, in one-letter code: Elicitor peptide 7 (85 aa).

Residues 1–62 constitute a propeptide that is removed on maturation; the sequence is MEGEGRREDG…TEVVNIPRSV (62 aa). The interval 66 to 85 is disordered; it reads NVAARKGKQQTSSGKGGGTN.

This sequence belongs to the brassicaceae elicitor peptide family.

Elicitor of plant defense. This Arabidopsis thaliana (Mouse-ear cress) protein is Elicitor peptide 7 (PEP7).